Reading from the N-terminus, the 126-residue chain is Large ribosomal subunit protein bL12 (126 aa).

This sequence belongs to the bacterial ribosomal protein bL12 family. As to quaternary structure, homodimer. Part of the ribosomal stalk of the 50S ribosomal subunit. Forms a multimeric L10(L12)X complex, where L10 forms an elongated spine to which 2 to 4 L12 dimers bind in a sequential fashion. Binds GTP-bound translation factors.

Its function is as follows. Forms part of the ribosomal stalk which helps the ribosome interact with GTP-bound translation factors. Is thus essential for accurate translation. The polypeptide is Large ribosomal subunit protein bL12 (Chlorobaculum parvum (strain DSM 263 / NCIMB 8327) (Chlorobium vibrioforme subsp. thiosulfatophilum)).